The chain runs to 248 residues: Large ribosomal subunit protein uL30 (248 aa).

Met-1 carries the N-acetylmethionine modification. A run of 4 repeats spans residues 7-18, 19-30, 31-42, and 43-54. A 4 X 12 AA tandem repeats region spans residues 7–54; it reads KKKKVPAVPETLKKKRKNFAELKIKRLRKKFAQKMLRKARRKLIYEKA. Thr-17 is subject to Phosphothreonine. Lys-124 is modified (N6-acetyllysine). An N6-succinyllysine modification is found at Lys-127. Tyr-139 carries the phosphotyrosine modification.

The protein belongs to the universal ribosomal protein uL30 family. Component of the large ribosomal subunit. Homodimer. Interacts with DHX33.

Its subcellular location is the cytoplasm. Functionally, component of the large ribosomal subunit. The ribosome is a large ribonucleoprotein complex responsible for the synthesis of proteins in the cell. Binds to G-rich structures in 28S rRNA and in mRNAs. Plays a regulatory role in the translation apparatus; inhibits cell-free translation of mRNAs. In Bos taurus (Bovine), this protein is Large ribosomal subunit protein uL30 (RPL7).